The primary structure comprises 307 residues: Synaptophysin (307 aa).

The Cytoplasmic segment spans residues 1–19 (MDVVNQLVAGGQFRVVKEP). Residues 15–222 (VVKEPLGFVK…NLWFVFKETG (208 aa)) enclose the MARVEL domain. A helical transmembrane segment spans residues 20–43 (LGFVKVLQWVFAIFAFATCGSYTG). The Vesicular segment spans residues 44 to 101 (ELRLSVECANKTESALNIEVEFEYPFRLHQVYFDAPSCVKGGTTKIFLVGDYSSSAEF). Residue Asn-53 is glycosylated (N-linked (GlcNAc...) asparagine). Tyr-75 carries the phosphotyrosine modification. The chain crosses the membrane as a helical span at residues 102-125 (FVTVAVFAFLYSMGALATYIFLQN). Topologically, residues 126-132 (KYRENNK) are cytoplasmic. The chain crosses the membrane as a helical span at residues 133 to 156 (GPMMDFLATAVFAFMWLVSSSAWA). Residues 157–194 (KGLSDVKMATDPENIIKEMPMCRQTGNTCKELRDPVTS) are Vesicular-facing. Residues 195–218 (GLNTSVVFGFLNLVLWVGNLWFVF) form a helical membrane-spanning segment. Over 219 to 307 (KETGWAAPFM…GAPTSFSNQM (89 aa)) the chain is Cytoplasmic. Thr-221 is subject to Phosphothreonine. Residues 233-307 (GAPEKQPAPG…GAPTSFSNQM (75 aa)) are disordered. Residues 248 to 258 (AGYGQGPGGYG) are compositionally biased toward gly residues. A repeats, Gly-rich region spans residues 249 to 298 (GYGQGPGGYGPQDSYGPQGGYQPDYGQPASGGGGYGPQGDYGQQGYGQQG). Positions 259–276 (PQDSYGPQGGYQPDYGQP) are enriched in low complexity. Residues Tyr-273 and Tyr-289 each carry the phosphotyrosine modification. A compositionally biased stretch (gly residues) spans 277–296 (ASGGGGYGPQGDYGQQGYGQ).

The protein belongs to the synaptophysin/synaptobrevin family. As to quaternary structure, homohexamer or homotetramer. Interacts with SRCIN1. Interacts with VAMP2; the interaction is inhibited by interaction of VAPM2 with SEPT8. Ubiquitinated; mediated by SIAH1 or SIAH2 and leading to its subsequent proteasomal degradation. Post-translationally, phosphorylated by SRC. In terms of tissue distribution, expressed in the brain with expression in the cerebrum and the cerebellum.

Its subcellular location is the cytoplasmic vesicle. It localises to the secretory vesicle. It is found in the synaptic vesicle membrane. The protein localises to the synapse. The protein resides in the synaptosome. Its function is as follows. Possibly involved in structural functions as organizing other membrane components or in targeting the vesicles to the plasma membrane. Involved in the regulation of short-term and long-term synaptic plasticity. The protein is Synaptophysin (Syp) of Rattus norvegicus (Rat).